The chain runs to 150 residues: Urease accessory protein UreE (150 aa).

This sequence belongs to the UreE family.

Its subcellular location is the cytoplasm. Involved in urease metallocenter assembly. Binds nickel. Probably functions as a nickel donor during metallocenter assembly. In Staphylococcus carnosus (strain TM300), this protein is Urease accessory protein UreE.